The chain runs to 376 residues: N-acetyldiaminopimelate deacetylase (376 aa).

The active site involves Asp69. Glu128 (proton acceptor) is an active-site residue.

This sequence belongs to the peptidase M20A family. N-acetyldiaminopimelate deacetylase subfamily.

It catalyses the reaction N-acetyl-(2S,6S)-2,6-diaminopimelate + H2O = (2S,6S)-2,6-diaminopimelate + acetate. Its pathway is amino-acid biosynthesis; L-lysine biosynthesis via DAP pathway; LL-2,6-diaminopimelate from (S)-tetrahydrodipicolinate (acetylase route): step 3/3. In terms of biological role, catalyzes the conversion of N-acetyl-diaminopimelate to diaminopimelate and acetate. The sequence is that of N-acetyldiaminopimelate deacetylase from Streptococcus pneumoniae serotype 19F (strain G54).